The following is a 358-amino-acid chain: Forkhead box protein I1c (358 aa).

Polar residues predominate over residues 1 to 13 (MNSIHLPSHQRTS). 2 disordered regions span residues 1-25 (MNSI…PKGA) and 191-255 (DNGN…PSGI). Positions 106-200 (RPPYSYSALI…DNGNFRRKRK (95 aa)) form a DNA-binding region, fork-head.

The protein resides in the nucleus. Probable transcription factor. The sequence is that of Forkhead box protein I1c from Xenopus tropicalis (Western clawed frog).